Consider the following 85-residue polypeptide: Putative membrane protein insertion efficiency factor (85 aa).

This sequence belongs to the UPF0161 family.

Its subcellular location is the cell inner membrane. Functionally, could be involved in insertion of integral membrane proteins into the membrane. This is Putative membrane protein insertion efficiency factor from Escherichia coli O6:H1 (strain CFT073 / ATCC 700928 / UPEC).